Reading from the N-terminus, the 100-residue chain is Glutamyl-tRNA(Gln) amidotransferase subunit C (100 aa).

The protein belongs to the GatC family. Heterotrimer of A, B and C subunits.

The enzyme catalyses L-glutamyl-tRNA(Gln) + L-glutamine + ATP + H2O = L-glutaminyl-tRNA(Gln) + L-glutamate + ADP + phosphate + H(+). The catalysed reaction is L-aspartyl-tRNA(Asn) + L-glutamine + ATP + H2O = L-asparaginyl-tRNA(Asn) + L-glutamate + ADP + phosphate + 2 H(+). In terms of biological role, allows the formation of correctly charged Asn-tRNA(Asn) or Gln-tRNA(Gln) through the transamidation of misacylated Asp-tRNA(Asn) or Glu-tRNA(Gln) in organisms which lack either or both of asparaginyl-tRNA or glutaminyl-tRNA synthetases. The reaction takes place in the presence of glutamine and ATP through an activated phospho-Asp-tRNA(Asn) or phospho-Glu-tRNA(Gln). The polypeptide is Glutamyl-tRNA(Gln) amidotransferase subunit C (Rickettsia conorii (strain ATCC VR-613 / Malish 7)).